A 314-amino-acid chain; its full sequence is 4-hydroxy-3-methylbut-2-enyl diphosphate reductase (314 aa).

Cysteine 12 provides a ligand contact to [4Fe-4S] cluster. The (2E)-4-hydroxy-3-methylbut-2-enyl diphosphate site is built by histidine 41 and histidine 74. Dimethylallyl diphosphate is bound by residues histidine 41 and histidine 74. Histidine 41 and histidine 74 together coordinate isopentenyl diphosphate. Cysteine 96 serves as a coordination point for [4Fe-4S] cluster. Histidine 124 provides a ligand contact to (2E)-4-hydroxy-3-methylbut-2-enyl diphosphate. Histidine 124 provides a ligand contact to dimethylallyl diphosphate. Isopentenyl diphosphate is bound at residue histidine 124. Glutamate 126 serves as the catalytic Proton donor. Residue threonine 167 coordinates (2E)-4-hydroxy-3-methylbut-2-enyl diphosphate. Position 197 (cysteine 197) interacts with [4Fe-4S] cluster. (2E)-4-hydroxy-3-methylbut-2-enyl diphosphate-binding residues include serine 225, serine 226, asparagine 227, and serine 269. Positions 225, 226, 227, and 269 each coordinate dimethylallyl diphosphate. Residues serine 225, serine 226, asparagine 227, and serine 269 each contribute to the isopentenyl diphosphate site.

Belongs to the IspH family. [4Fe-4S] cluster serves as cofactor.

It carries out the reaction isopentenyl diphosphate + 2 oxidized [2Fe-2S]-[ferredoxin] + H2O = (2E)-4-hydroxy-3-methylbut-2-enyl diphosphate + 2 reduced [2Fe-2S]-[ferredoxin] + 2 H(+). The enzyme catalyses dimethylallyl diphosphate + 2 oxidized [2Fe-2S]-[ferredoxin] + H2O = (2E)-4-hydroxy-3-methylbut-2-enyl diphosphate + 2 reduced [2Fe-2S]-[ferredoxin] + 2 H(+). The protein operates within isoprenoid biosynthesis; dimethylallyl diphosphate biosynthesis; dimethylallyl diphosphate from (2E)-4-hydroxy-3-methylbutenyl diphosphate: step 1/1. It functions in the pathway isoprenoid biosynthesis; isopentenyl diphosphate biosynthesis via DXP pathway; isopentenyl diphosphate from 1-deoxy-D-xylulose 5-phosphate: step 6/6. In terms of biological role, catalyzes the conversion of 1-hydroxy-2-methyl-2-(E)-butenyl 4-diphosphate (HMBPP) into a mixture of isopentenyl diphosphate (IPP) and dimethylallyl diphosphate (DMAPP). Acts in the terminal step of the DOXP/MEP pathway for isoprenoid precursor biosynthesis. In Haemophilus influenzae (strain PittGG), this protein is 4-hydroxy-3-methylbut-2-enyl diphosphate reductase.